A 215-amino-acid chain; its full sequence is Mediator of RNA polymerase II transcription subunit 18 (215 aa).

It belongs to the Mediator complex subunit 18 family. Component of the Mediator complex.

It is found in the nucleus. Its function is as follows. Component of the Mediator complex, a coactivator involved in the regulated transcription of nearly all RNA polymerase II-dependent genes. Mediator functions as a bridge to convey information from gene-specific regulatory proteins to the basal RNA polymerase II transcription machinery. Mediator is recruited to promoters by direct interactions with regulatory proteins and serves as a scaffold for the assembly of a functional preinitiation complex with RNA polymerase II and the general transcription factors. The protein is Mediator of RNA polymerase II transcription subunit 18 (MED18) of Aedes aegypti (Yellowfever mosquito).